We begin with the raw amino-acid sequence, 446 residues long: Adenylosuccinate synthetase (446 aa).

GTP contacts are provided by residues 20-26 (GDEGKGK) and 48-50 (GHT). The active-site Proton acceptor is the Asp-21. Mg(2+) contacts are provided by Asp-21 and Gly-48. IMP-binding positions include 21–24 (DEGK), 46–49 (NAGH), Thr-137, Arg-151, Gln-232, Thr-247, and Arg-319. His-49 (proton donor) is an active-site residue. Substrate is bound at residue 315-321 (SVTGRPR). GTP contacts are provided by residues Arg-321, 347–349 (KLD), and 429–431 (STG).

It belongs to the adenylosuccinate synthetase family. Homodimer. Mg(2+) is required as a cofactor.

It localises to the cytoplasm. It carries out the reaction IMP + L-aspartate + GTP = N(6)-(1,2-dicarboxyethyl)-AMP + GDP + phosphate + 2 H(+). The protein operates within purine metabolism; AMP biosynthesis via de novo pathway; AMP from IMP: step 1/2. Functionally, plays an important role in the de novo pathway of purine nucleotide biosynthesis. Catalyzes the first committed step in the biosynthesis of AMP from IMP. The sequence is that of Adenylosuccinate synthetase from Ralstonia pickettii (strain 12J).